Consider the following 872-residue polypeptide: Alanine--tRNA ligase (872 aa).

Residues H563, H567, C665, and H669 each contribute to the Zn(2+) site.

The protein belongs to the class-II aminoacyl-tRNA synthetase family. Zn(2+) serves as cofactor.

The protein localises to the cytoplasm. It catalyses the reaction tRNA(Ala) + L-alanine + ATP = L-alanyl-tRNA(Ala) + AMP + diphosphate. Functionally, catalyzes the attachment of alanine to tRNA(Ala) in a two-step reaction: alanine is first activated by ATP to form Ala-AMP and then transferred to the acceptor end of tRNA(Ala). Also edits incorrectly charged Ser-tRNA(Ala) and Gly-tRNA(Ala) via its editing domain. This is Alanine--tRNA ligase from Bacteroides fragilis (strain ATCC 25285 / DSM 2151 / CCUG 4856 / JCM 11019 / LMG 10263 / NCTC 9343 / Onslow / VPI 2553 / EN-2).